A 472-amino-acid polypeptide reads, in one-letter code: Nucleoporin NUP49/NSP49 (472 aa).

Residues 2–3 (FG) form an FG 1 repeat. The stretch at 14–17 (GLFG) is one GLFG 1 repeat. A disordered region spans residues 28 to 104 (NTGFSFGGTQ…TANTGGGLFG (77 aa)). One copy of the FG 2 repeat lies at 33–34 (FG). The stretch at 48–51 (GLFG) is one GLFG 2 repeat. The segment covering 64-80 (SFGQQQQQSQTNAFGGS) has biased composition (low complexity). FG repeat units follow at residues 65-66 (FG) and 77-78 (FG). GLFG repeat units lie at residues 86–89 (GLFG) and 101–104 (GLFG). One copy of the SLFG 1 repeat lies at 113–116 (SLFG). 2 GLFG repeats span residues 125-128 (GLFG) and 148-151 (GLFG). One copy of the SLFG 2 repeat lies at 159-162 (SLFG). The GLFG 7; approximate repeat unit spans residues 175-178 (GMFG). The SLFG 3 repeat unit spans residues 185-188 (SLFG). One copy of the GLFG 8 repeat lies at 199 to 202 (GLFG). An SLFG 4 repeat occupies 210–213 (SLFG). Positions 211–242 (LFGSSNNNNNNNNSNNIMSASGGLFGNQQQQL) are disordered. Residues 214 to 226 (SSNNNNNNNNSNN) show a composition bias toward low complexity. The GLFG 9 repeat unit spans residues 233–236 (GLFG).

It belongs to the nucleoporin GLFG family. As to quaternary structure, component of the nuclear pore complex (NPC). NPC constitutes the exclusive means of nucleocytoplasmic transport. NPCs allow the passive diffusion of ions and small molecules and the active, nuclear transport receptor-mediated bidirectional transport of macromolecules such as proteins, RNAs, ribonucleoparticles (RNPs), and ribosomal subunits across the nuclear envelope. Due to its 8-fold rotational symmetry, all subunits are present with 8 copies or multiples thereof. NUP49 is part of the NUP57 subcomplex (NIC96, NSP1, NUP49, NUP57) interacting with NUP57. Interacts through its FG repeats with karyopherins.

It is found in the nucleus. The protein resides in the nuclear pore complex. Its subcellular location is the nucleus membrane. In terms of biological role, functions as a component of the nuclear pore complex (NPC). NPC components, collectively referred to as nucleoporins (NUPs), can play the role of both NPC structural components and of docking or interaction partners for transiently associated nuclear transport factors. Active directional transport is assured by both, a Phe-Gly (FG) repeat affinity gradient for these transport factors across the NPC and a transport cofactor concentration gradient across the nuclear envelope (GSP1 and GSP2 GTPases associated predominantly with GTP in the nucleus, with GDP in the cytoplasm). NUP49 plays an important role in several nuclear transport pathways including poly(A)+ RNA, tRNA, and pre-ribosome transport. This chain is Nucleoporin NUP49/NSP49 (NUP49), found in Saccharomyces cerevisiae (strain ATCC 204508 / S288c) (Baker's yeast).